Here is a 500-residue protein sequence, read N- to C-terminus: UPF0371 protein SZO_06760 (500 aa).

The protein belongs to the UPF0371 family.

This chain is UPF0371 protein SZO_06760, found in Streptococcus equi subsp. zooepidemicus (strain H70).